Reading from the N-terminus, the 203-residue chain is Putative archaetidylserine decarboxylase proenzyme (203 aa).

The active-site Schiff-base intermediate with substrate; via pyruvic acid is the serine 171. The residue at position 171 (serine 171) is a Pyruvic acid (Ser); by autocatalysis.

This sequence belongs to the phosphatidylserine decarboxylase family. PSD-A subfamily. In terms of assembly, heterodimer of a large membrane-associated beta subunit and a small pyruvoyl-containing alpha subunit. Pyruvate is required as a cofactor. Post-translationally, is synthesized initially as an inactive proenzyme. Formation of the active enzyme involves a self-maturation process in which the active site pyruvoyl group is generated from an internal serine residue via an autocatalytic post-translational modification. Two non-identical subunits are generated from the proenzyme in this reaction, and the pyruvate is formed at the N-terminus of the alpha chain, which is derived from the carboxyl end of the proenzyme. The post-translation cleavage follows an unusual pathway, termed non-hydrolytic serinolysis, in which the side chain hydroxyl group of the serine supplies its oxygen atom to form the C-terminus of the beta chain, while the remainder of the serine residue undergoes an oxidative deamination to produce ammonia and the pyruvoyl prosthetic group on the alpha chain.

The protein localises to the cell membrane. It carries out the reaction archaetidylserine + H(+) = archaetidylethanolamine + CO2. Functionally, catalyzes the formation of archaetidylethanolamine (PtdEtn) from archaetidylserine (PtdSer). This is Putative archaetidylserine decarboxylase proenzyme from Methanosarcina barkeri (strain Fusaro / DSM 804).